The chain runs to 209 residues: MAKVHILDHPLIQHKLSLIRDENTGSKDFRELVEEVSMLMAYEVTRDFPLQDVEVKTPVATMTAKAIAGRKVGLIPILRAGLGMVDGMLRLIPTAKVGHVGLYRDPETLKPVEYYCKLPTDVEERDLIVIDPMLATGGSATAAITFLKDRGAKSIKLMCLIAAPEGIKEVQNYHDDVDIFVAAVDDYLNDHGYIIPGLGDAGDRLFGTK.

5-phospho-alpha-D-ribose 1-diphosphate-binding positions include R79, R104, and 131 to 139 (DPMLATGGS). Uracil-binding positions include I194 and 199–201 (GDA). D200 is a 5-phospho-alpha-D-ribose 1-diphosphate binding site.

It belongs to the UPRTase family. It depends on Mg(2+) as a cofactor.

The enzyme catalyses UMP + diphosphate = 5-phospho-alpha-D-ribose 1-diphosphate + uracil. The protein operates within pyrimidine metabolism; UMP biosynthesis via salvage pathway; UMP from uracil: step 1/1. Allosterically activated by GTP. Its function is as follows. Catalyzes the conversion of uracil and 5-phospho-alpha-D-ribose 1-diphosphate (PRPP) to UMP and diphosphate. This chain is Uracil phosphoribosyltransferase, found in Desulfitobacterium hafniense (strain DSM 10664 / DCB-2).